We begin with the raw amino-acid sequence, 866 residues long: Dynamin-2 (866 aa).

One can recognise a Dynamin-type G domain in the interval 28-294; the sequence is HLDLPQIAVV…LTNHIRESLP (267 aa). The G1 motif stretch occupies residues 38–45; the sequence is GGQSAGKS. Positions 41, 43, 44, 45, 46, 59, and 60 each coordinate GDP. The segment at 64 to 66 is G2 motif; sequence VTR. Residues 136–139 form a G3 motif region; sequence DLPG. The interval 205-208 is G4 motif; it reads TKLD. The GDP site is built by Lys-206, Asp-208, and Asp-211. Residue Tyr-231 is modified to Phosphotyrosine. The interval 235–238 is G5 motif; sequence VNRS. Asn-236, Arg-237, and Gln-239 together coordinate GDP. Lys-299 bears the N6-acetyllysine mark. The PH domain maps to 515 to 621; sequence QVIRRGWLTI…WKASFLRAGV (107 aa). Position 593 is a phosphotyrosine (Tyr-593). An N6-acetyllysine modification is found at Lys-594. The region spanning 649 to 740 is the GED domain; it reads VETIRNLVDS…IIGDISTSTV (92 aa). Residues 737–866 are disordered; the sequence is TSTVSTPVPP…IRPAEPSLLD (130 aa). Residue Thr-751 is modified to Phosphothreonine. Residues 752–763 show a composition bias toward polar residues; that stretch reads WIQNTSSHSPTP. Residue Ser-760 is modified to Phosphoserine; by CDK1. Pro residues-rich tracts occupy residues 784–794, 802–811, and 822–851; these read TPGPPLIPVPV, PPIPSRPGPH, and SAPP…PAAP.

This sequence belongs to the TRAFAC class dynamin-like GTPase superfamily. Dynamin/Fzo/YdjA family. Oligomerizes into a helical polymer that self-assembles around the vesicle membrane, when associated to the menbrane through lipid binding. Interacts with SHANK1 and SHANK2. Interacts with SNX9. Interacts (via C-terminal proline-rich domain (PRD)) with SNX18 (via SH3 domain); this interaction regulates ATG9A and ATG16L1 trafficking from recycling endosomes to sites of autophagosome formation. Interacts with SNX33 (via SH3 domain). Interacts with MYO1E (via SH3 domain). Interacts with PSTPIP1 (via SH3 domain). Interacts with CTNND2. Interacts (via C-terminal proline-rich domain (PRD)) with BIN1 (via SH3 domain); this interaction allows the recruitment of DNM2 to the membrane tubules and inhibits self-assembly-stimulated GTPase activity on the membrane. Interacts with GABARAP, GABARAPL1 and GABARAPL2. Interacts with MAP1LC3B (the lipidate and non-lipidated LC3 form); this interaction mediates recycling endosome scission leading to autophagosome release. Interacts with ITSN1. Interacts with MYOF. Interacts (via C-terminal proline-rich domain (PRD)) with SH3BP4 (via SH3 domain); this interaction controls the GTPase activity and is prevented by EGFR-induced tyrosine phosphorylation of either DNM2 or SH3BP4. May interact with PIK3C3. May be a component of a complex composed of RAB5A (in GDP-bound form), DYN2 and PIK3C3. Interacts with SDC4; this interaction is markedly enhanced at focal ahesion site upon induction of focal adhesions and stress-fiber formation. Interacts with ACTN1. Interacts with CTTN; this interaction stimulates the intrinsic GTPase activity of DNM2 and stabilizes the association of DNM2 and actin filaments; in addition this interaction is stimulated by ligand binding to the receptor, leading to the recruitment of the DNM2-CTTN complex to the sequestered receptor-ligand complex to its internalization. Interacts with NOSTRIN (via SH3 domain); this interaction allows the recruitment of NOS3 to dynamin-positive structures. Interacts with TUBG1; this interaction may participate in centrosome cohesion. In terms of processing, phosphorylation at Ser-844 by GSK3-alpha relieves the inhibition of BIN1 and promotes endocytosis. Phosphorylation at Ser-760 by CDK1 is greatly increased upon mitotic entry. It regulates cytokinesis downstream of calcineurin, and does not affect clathrin-mediated endocytosis. Dephosphorylated by calcineurin/PP2 during cytokinesis in a Ca(2+)- and calmodulin-dependent manner. Phosphorylated on tyrosine residues by EGFR and after activation of SRC.

It localises to the cytoplasm. The protein localises to the cytoskeleton. The protein resides in the cytoplasmic vesicle. It is found in the clathrin-coated vesicle. Its subcellular location is the cell projection. It localises to the uropodium. The protein localises to the endosome. The protein resides in the microtubule organizing center. It is found in the centrosome. Its subcellular location is the centriole. It localises to the recycling endosome. The protein localises to the phagocytic cup. The protein resides in the phagosome membrane. It is found in the podosome. Its subcellular location is the cell junction. It localises to the postsynaptic density. The protein localises to the synapse. The protein resides in the synaptosome. It is found in the midbody. Its subcellular location is the membrane. It localises to the clathrin-coated pit. It carries out the reaction GTP + H2O = GDP + phosphate + H(+). Its function is as follows. Catalyzes the hydrolysis of GTP and utilizes this energy to mediate vesicle scission at plasma membrane during endocytosis and filament remodeling at many actin structures during organization of the actin cytoskeleton. Plays an important role in vesicular trafficking processes, namely clathrin-mediated endocytosis (CME), exocytic and clathrin-coated vesicle from the trans-Golgi network, and PDGF stimulated macropinocytosis. During vesicular trafficking process, associates to the membrane, through lipid binding, and self-assembles into ring-like structure through oligomerization to form a helical polymer around the vesicle membrane and leading to vesicle scission. Plays a role in organization of the actin cytoskeleton by mediating arrangement of stress fibers and actin bundles in podocytes. During organization of the actin cytoskeleton, self-assembles into ring-like structure that directly bundles actin filaments to form typical membrane tubules decorated with dynamin spiral polymers. Self-assembly increases GTPase activity and the GTP hydrolysis causes the rapid depolymerization of dynamin spiral polymers, and results in dispersion of actin bundles. Remodels, through its interaction with CTTN, bundled actin filaments in a GTPase-dependent manner and plays a role in orchestrating the global actomyosin cytoskeleton. The interaction with CTTN stabilizes the interaction of DNM2 and actin filaments and stimulates the intrinsic GTPase activity that results in actin filament-barbed ends and increases the sensitivity of filaments in bundles to the actin depolymerizing factor, CFL1. Plays a role in the autophagy process, by participating in the formation of ATG9A vesicles destined for the autophagosomes through its interaction with SNX18, by mediating recycling endosome scission leading to autophagosome release through MAP1LC3B interaction. Also regulates maturation of apoptotic cell corpse-containing phagosomes by recruiting PIK3C3 to the phagosome membrane. Also plays a role in cytokinesis. May participate in centrosome cohesion through its interaction with TUBG1. Plays a role in the regulation of neuron morphology, axon growth and formation of neuronal growth cones. Involved in membrane tubulation. This Bos taurus (Bovine) protein is Dynamin-2.